The primary structure comprises 162 residues: Cyclic pyranopterin monophosphate synthase (162 aa).

Residues 75-77 and 113-114 contribute to the substrate site; these read LCH and ME. Residue aspartate 128 is part of the active site.

Belongs to the MoaC family. Homohexamer; trimer of dimers.

It carries out the reaction (8S)-3',8-cyclo-7,8-dihydroguanosine 5'-triphosphate = cyclic pyranopterin phosphate + diphosphate. Its pathway is cofactor biosynthesis; molybdopterin biosynthesis. In terms of biological role, catalyzes the conversion of (8S)-3',8-cyclo-7,8-dihydroguanosine 5'-triphosphate to cyclic pyranopterin monophosphate (cPMP). This Klebsiella pneumoniae subsp. pneumoniae (strain ATCC 700721 / MGH 78578) protein is Cyclic pyranopterin monophosphate synthase.